Here is a 155-residue protein sequence, read N- to C-terminus: MPIDGYSSLTQLGRQAGVPANPDEAVIETFANPHPGTNYTVRLTAPELTTICPITGQPDFATLIVDYVPRDRLVESKSFKLFLGSFRNLGTFHEDCTAYIHKRLSDALDAAFLRVVGLWNARGGITIDCVVQTGELPSNCALLPLGRTDYRTGRI.

The Thioimide intermediate role is filled by C52. D59 serves as the catalytic Proton donor. Substrate-binding positions include 74 to 76 and 93 to 94; these read VES and HE.

It belongs to the GTP cyclohydrolase I family. QueF type 1 subfamily.

It is found in the cytoplasm. The enzyme catalyses 7-aminomethyl-7-carbaguanine + 2 NADP(+) = 7-cyano-7-deazaguanine + 2 NADPH + 3 H(+). Its pathway is tRNA modification; tRNA-queuosine biosynthesis. Catalyzes the NADPH-dependent reduction of 7-cyano-7-deazaguanine (preQ0) to 7-aminomethyl-7-deazaguanine (preQ1). The sequence is that of NADPH-dependent 7-cyano-7-deazaguanine reductase from Syntrophobacter fumaroxidans (strain DSM 10017 / MPOB).